The sequence spans 908 residues: Protein translocase subunit SecA (908 aa).

ATP is bound by residues Gln-87, Gly-105 to Thr-109, and Asp-512. The disordered stretch occupies residues Gly-865–Ser-908. Residues Met-879–Arg-888 are compositionally biased toward basic and acidic residues. Positions 892, 894, 903, and 904 each coordinate Zn(2+). Basic residues predominate over residues Arg-898–Ser-908.

This sequence belongs to the SecA family. As to quaternary structure, monomer and homodimer. Part of the essential Sec protein translocation apparatus which comprises SecA, SecYEG and auxiliary proteins SecDF-YajC and YidC. The cofactor is Zn(2+).

Its subcellular location is the cell inner membrane. It is found in the cytoplasm. It carries out the reaction ATP + H2O + cellular proteinSide 1 = ADP + phosphate + cellular proteinSide 2.. Functionally, part of the Sec protein translocase complex. Interacts with the SecYEG preprotein conducting channel. Has a central role in coupling the hydrolysis of ATP to the transfer of proteins into and across the cell membrane, serving both as a receptor for the preprotein-SecB complex and as an ATP-driven molecular motor driving the stepwise translocation of polypeptide chains across the membrane. The sequence is that of Protein translocase subunit SecA from Shewanella sp. (strain MR-7).